A 483-amino-acid chain; its full sequence is Serine protease HTRA4 (483 aa).

The signal sequence occupies residues 1-30 (MSFQRLWAVRTQFLLLWLLLPAVPVPWAEA). Residues 35–113 (VSLPCPDACD…GAWLGTCGCA (79 aa)) form the IGFBP N-terminal domain. 6 disulfide bridges follow: C39/C65, C43/C67, C48/C68, C54/C71, C79/C93, and C87/C110. The serine protease stretch occupies residues 208 to 368 (GSGFIVSEDG…IPSDRIRQFL (161 aa)). Residues H224, D254, and S332 each act as charge relay system in the active site. In terms of domain architecture, PDZ spans 379–471 (KAPLQKKYLG…LSIIVLRGSQ (93 aa)).

This sequence belongs to the peptidase S1C family.

Its subcellular location is the secreted. Its function is as follows. Serine protease. This is Serine protease HTRA4 (Htra4) from Mus musculus (Mouse).